The chain runs to 413 residues: Probable inactive allantoicase (413 aa).

Belongs to the allantoicase family.

Functionally, the function of this enzyme is unclear as allantoicase activity is not known to exist in mammals. This Rattus norvegicus (Rat) protein is Probable inactive allantoicase.